Here is a 243-residue protein sequence, read N- to C-terminus: uncharacterized protein (243 aa).

A run of 4 helical transmembrane segments spans residues Ala38–Phe58, Phe99–Tyr119, Phe143–Leu163, and Ala204–Phe224.

It is found in the cell membrane. This is an uncharacterized protein from Mycoplasma pneumoniae (strain ATCC 29342 / M129 / Subtype 1) (Mycoplasmoides pneumoniae).